Consider the following 103-residue polypeptide: Large ribosomal subunit protein uL24 (103 aa).

It belongs to the universal ribosomal protein uL24 family. In terms of assembly, part of the 50S ribosomal subunit.

One of two assembly initiator proteins, it binds directly to the 5'-end of the 23S rRNA, where it nucleates assembly of the 50S subunit. Functionally, one of the proteins that surrounds the polypeptide exit tunnel on the outside of the subunit. The polypeptide is Large ribosomal subunit protein uL24 (Haemophilus influenzae (strain PittEE)).